The primary structure comprises 115 residues: Putative TGFB1-induced anti-apoptotic factor 1 (115 aa).

Not detectable in normal kidney and liver. Up-regulated in chronic and acute allograft rejection: expressed in the inflammatory infiltrate and in tubular epithelial cells.

Its subcellular location is the nucleus. Functionally, inhibits the cytotoxic effects of TNF-alpha and overexpressed TNF receptor adapters TRADD, FADD, and RIPK1. Involved in TGF-beta1 inhibition of IkappaB-alpha expression and suppression of TNF-mediated IkappaB-alpha degradation. This Homo sapiens (Human) protein is Putative TGFB1-induced anti-apoptotic factor 1 (MYO18A).